The following is a 950-amino-acid chain: 2-oxoglutarate dehydrogenase E1 component (950 aa).

Belongs to the alpha-ketoglutarate dehydrogenase family. As to quaternary structure, homodimer. Part of the 2-oxoglutarate dehydrogenase (OGDH) complex composed of E1 (2-oxoglutarate dehydrogenase), E2 (dihydrolipoamide succinyltransferase) and E3 (dihydrolipoamide dehydrogenase); the complex contains multiple copies of the three enzymatic components (E1, E2 and E3). Thiamine diphosphate serves as cofactor.

The catalysed reaction is N(6)-[(R)-lipoyl]-L-lysyl-[protein] + 2-oxoglutarate + H(+) = N(6)-[(R)-S(8)-succinyldihydrolipoyl]-L-lysyl-[protein] + CO2. Its function is as follows. E1 component of the 2-oxoglutarate dehydrogenase (OGDH) complex which catalyzes the decarboxylation of 2-oxoglutarate, the first step in the conversion of 2-oxoglutarate to succinyl-CoA and CO(2). The chain is 2-oxoglutarate dehydrogenase E1 component from Geobacillus kaustophilus (strain HTA426).